Here is a 394-residue protein sequence, read N- to C-terminus: Na(+)/H(+) antiporter NhaA 2 (394 aa).

The next 11 helical transmembrane spans lie at 13–33 (FGGV…NGFL), 58–78 (LILW…GLEL), 93–113 (IALP…IFWA), 124–144 (GWAI…MLLG), 153–173 (IFLL…IAIF), 176–196 (TKLS…LWVL), 208–228 (ILVT…ATIA), 260–280 (YFIL…GVQI), 291–311 (IFFG…YIFI), 327–347 (FYGV…VNSL), and 361–381 (LGIL…LLVF).

Belongs to the NhaA Na(+)/H(+) (TC 2.A.33) antiporter family.

It is found in the cell inner membrane. It catalyses the reaction Na(+)(in) + 2 H(+)(out) = Na(+)(out) + 2 H(+)(in). Functionally, na(+)/H(+) antiporter that extrudes sodium in exchange for external protons. The sequence is that of Na(+)/H(+) antiporter NhaA 2 from Campylobacter fetus subsp. fetus (strain 82-40).